The chain runs to 129 residues: Transcriptional regulator WhiB2 (129 aa).

The interval 23 to 45 (SHAPHIDTGSTPTGAAGRPQLSL) is disordered. One can recognise a 4Fe-4S Wbl-type domain in the interval 66-123 (LCAQTDPEAFFPEKGGSTREAKRICQGCEVRDACLEYALAHDERFGIWGGLSERERRR). The [4Fe-4S] cluster site is built by Cys67, Cys90, Cys93, and Cys99.

This sequence belongs to the WhiB family. Requires [4Fe-4S] cluster as cofactor. The Fe-S cluster can be nitrosylated by nitric oxide (NO). In terms of processing, upon Fe-S cluster removal intramolecular disulfide bonds are formed.

It is found in the cytoplasm. Functionally, acts as a transcriptional regulator. Probably redox-responsive. The apo- but not holo-form probably binds DNA. This chain is Transcriptional regulator WhiB2 (whiB2), found in Mycolicibacterium smegmatis (strain ATCC 700084 / mc(2)155) (Mycobacterium smegmatis).